We begin with the raw amino-acid sequence, 189 residues long: Small ribosomal subunit protein uS7 (189 aa).

It belongs to the universal ribosomal protein uS7 family. Part of the 30S ribosomal subunit.

Its function is as follows. One of the primary rRNA binding proteins, it binds directly to 16S rRNA where it nucleates assembly of the head domain of the 30S subunit. Is located at the subunit interface close to the decoding center. The chain is Small ribosomal subunit protein uS7 from Methanosarcina acetivorans (strain ATCC 35395 / DSM 2834 / JCM 12185 / C2A).